A 245-amino-acid chain; its full sequence is Membrane-associated progesterone-binding protein 4 (245 aa).

Residues 6-26 (RFLLSPFVGVTFIVVLVSLYF) traverse the membrane as a helical segment. Residues 39–138 (KRLFSAEELA…RTYTPVGKLV (100 aa)) form the Cytochrome b5 heme-binding domain. Residues 45-138 (EELALYNGTD…RTYTPVGKLV (94 aa)) are steroid-binding.

Belongs to the cytochrome b5 family. MAPR subfamily.

Its subcellular location is the membrane. This is Membrane-associated progesterone-binding protein 4 from Arabidopsis thaliana (Mouse-ear cress).